A 498-amino-acid polypeptide reads, in one-letter code: ATP synthase subunit beta, chloroplastic (498 aa).

172–179 (GGAGVGKT) contacts ATP.

This sequence belongs to the ATPase alpha/beta chains family. In terms of assembly, F-type ATPases have 2 components, CF(1) - the catalytic core - and CF(0) - the membrane proton channel. CF(1) has five subunits: alpha(3), beta(3), gamma(1), delta(1), epsilon(1). CF(0) has four main subunits: a(1), b(1), b'(1) and c(9-12).

Its subcellular location is the plastid. The protein localises to the chloroplast thylakoid membrane. The enzyme catalyses ATP + H2O + 4 H(+)(in) = ADP + phosphate + 5 H(+)(out). Produces ATP from ADP in the presence of a proton gradient across the membrane. The catalytic sites are hosted primarily by the beta subunits. The sequence is that of ATP synthase subunit beta, chloroplastic from Spinacia oleracea (Spinach).